Here is a 242-residue protein sequence, read N- to C-terminus: Glucosamine-6-phosphate deaminase (242 aa).

D67 serves as the catalytic Proton acceptor; for enolization step. Residue N136 is the For ring-opening step of the active site. H138 functions as the Proton acceptor; for ring-opening step in the catalytic mechanism. The active-site For ring-opening step is the E143.

It belongs to the glucosamine/galactosamine-6-phosphate isomerase family. NagB subfamily.

It carries out the reaction alpha-D-glucosamine 6-phosphate + H2O = beta-D-fructose 6-phosphate + NH4(+). The protein operates within amino-sugar metabolism; N-acetylneuraminate degradation; D-fructose 6-phosphate from N-acetylneuraminate: step 5/5. Catalyzes the reversible isomerization-deamination of glucosamine 6-phosphate (GlcN6P) to form fructose 6-phosphate (Fru6P) and ammonium ion. This Clostridium perfringens (strain SM101 / Type A) protein is Glucosamine-6-phosphate deaminase.